A 264-amino-acid polypeptide reads, in one-letter code: 3-methyl-2-oxobutanoate hydroxymethyltransferase (264 aa).

Residues Asp45 and Asp84 each coordinate Mg(2+). Residues 45 to 46 (DS), Asp84, and Lys112 contribute to the 3-methyl-2-oxobutanoate site. Glu114 serves as a coordination point for Mg(2+). Catalysis depends on Glu181, which acts as the Proton acceptor.

It belongs to the PanB family. As to quaternary structure, homodecamer; pentamer of dimers. Requires Mg(2+) as cofactor.

Its subcellular location is the cytoplasm. It carries out the reaction 3-methyl-2-oxobutanoate + (6R)-5,10-methylene-5,6,7,8-tetrahydrofolate + H2O = 2-dehydropantoate + (6S)-5,6,7,8-tetrahydrofolate. The protein operates within cofactor biosynthesis; (R)-pantothenate biosynthesis; (R)-pantoate from 3-methyl-2-oxobutanoate: step 1/2. In terms of biological role, catalyzes the reversible reaction in which hydroxymethyl group from 5,10-methylenetetrahydrofolate is transferred onto alpha-ketoisovalerate to form ketopantoate. The protein is 3-methyl-2-oxobutanoate hydroxymethyltransferase of Escherichia coli O7:K1 (strain IAI39 / ExPEC).